Reading from the N-terminus, the 221-residue chain is Lipoprotein-releasing system ATP-binding protein LolD (221 aa).

The ABC transporter domain occupies 6–220 (LILKNISKHY…YKLKHRLLNI (215 aa)). 42–49 (GSSGSGKS) serves as a coordination point for ATP.

This sequence belongs to the ABC transporter superfamily. Lipoprotein translocase (TC 3.A.1.125) family. In terms of assembly, the complex is composed of two ATP-binding proteins (LolD) and two transmembrane proteins (LolC and LolE).

The protein localises to the cell inner membrane. Functionally, part of the ABC transporter complex LolCDE involved in the translocation of mature outer membrane-directed lipoproteins, from the inner membrane to the periplasmic chaperone, LolA. Responsible for the formation of the LolA-lipoprotein complex in an ATP-dependent manner. The sequence is that of Lipoprotein-releasing system ATP-binding protein LolD from Rickettsia conorii (strain ATCC VR-613 / Malish 7).